Reading from the N-terminus, the 375-residue chain is Alcohol dehydrogenase 1C (375 aa).

Residue S2 is modified to N-acetylserine. Residue S23 is modified to Phosphoserine. Positions 47, 68, 98, 101, 104, 112, and 175 each coordinate Zn(2+). NAD(+) is bound by residues 200–205, D224, K229, I270, 293–295, 318–320, and R370; these read GLGGVG, VGV, and AIF.

This sequence belongs to the zinc-containing alcohol dehydrogenase family. As to quaternary structure, dimer of identical or non-identical chains of class I alcohol dehydrogenase: ADH1A, ADH1B, and ADH1C. The cofactor is Zn(2+).

The protein resides in the cytoplasm. It catalyses the reaction a primary alcohol + NAD(+) = an aldehyde + NADH + H(+). The catalysed reaction is ethanol + NAD(+) = acetaldehyde + NADH + H(+). Functionally, alcohol dehydrogenase. Exhibits high activity for ethanol oxidation and plays a major role in ethanol catabolism. The sequence is that of Alcohol dehydrogenase 1C (ADH1C) from Homo sapiens (Human).